The primary structure comprises 461 residues: tRNA modification GTPase MnmE (461 aa).

(6S)-5-formyl-5,6,7,8-tetrahydrofolate contacts are provided by R23, E84, and R123. The TrmE-type G domain occupies 216–383 (GARAALIGRP…LGATVARLLL (168 aa)). Residue N226 participates in K(+) binding. GTP-binding positions include 226–231 (NAGKSS), 245–251 (TPIPGTT), and 270–273 (DTAG). Position 230 (S230) interacts with Mg(2+). K(+)-binding residues include T245, I247, and T250. T251 is a binding site for Mg(2+). Residue K461 coordinates (6S)-5-formyl-5,6,7,8-tetrahydrofolate.

The protein belongs to the TRAFAC class TrmE-Era-EngA-EngB-Septin-like GTPase superfamily. TrmE GTPase family. Homodimer. Heterotetramer of two MnmE and two MnmG subunits. K(+) is required as a cofactor.

Its subcellular location is the cytoplasm. Exhibits a very high intrinsic GTPase hydrolysis rate. Involved in the addition of a carboxymethylaminomethyl (cmnm) group at the wobble position (U34) of certain tRNAs, forming tRNA-cmnm(5)s(2)U34. This is tRNA modification GTPase MnmE from Roseiflexus sp. (strain RS-1).